The sequence spans 431 residues: Adenylosuccinate synthetase (431 aa).

Residues 13-19 (GDEGKGK) and 41-43 (GHT) contribute to the GTP site. D14 acts as the Proton acceptor in catalysis. Residues D14 and G41 each contribute to the Mg(2+) site. Residues 14-17 (DEGK), 39-42 (NAGH), T130, R144, Q225, T240, and R304 each bind IMP. Catalysis depends on H42, which acts as the Proton donor. 300–306 (ATTGRQR) is a substrate binding site. Residues R306, 332-334 (KLD), and 414-416 (STG) contribute to the GTP site.

Belongs to the adenylosuccinate synthetase family. In terms of assembly, homodimer. It depends on Mg(2+) as a cofactor.

It is found in the cytoplasm. It catalyses the reaction IMP + L-aspartate + GTP = N(6)-(1,2-dicarboxyethyl)-AMP + GDP + phosphate + 2 H(+). Its pathway is purine metabolism; AMP biosynthesis via de novo pathway; AMP from IMP: step 1/2. Its function is as follows. Plays an important role in the de novo pathway of purine nucleotide biosynthesis. Catalyzes the first committed step in the biosynthesis of AMP from IMP. This Saccharophagus degradans (strain 2-40 / ATCC 43961 / DSM 17024) protein is Adenylosuccinate synthetase.